The primary structure comprises 538 residues: Protein PNS1 (538 aa).

The segment covering 1 to 54 has biased composition (low complexity); the sequence is MGESDAYYNGGQQQQYNGGYQQQYQPQPPAASYQAPPQQPYQQQPYQQGPPQNG. The disordered stretch occupies residues 1-67; that stretch reads MGESDAYYNG…GNGYMPAQGY (67 aa). Over 1 to 88 the chain is Cytoplasmic; the sequence is MGESDAYYNG…FKIAKPKYND (88 aa). A helical transmembrane segment spans residues 89–109; the sequence is LWAGILLILVFAGFVVVSGLA. Residues 110–137 are Extracellular-facing; it reads LQGYSANKGNAGDGIYNNKNDFSPNTST. An N-linked (GlcNAc...) asparagine glycan is attached at N134. Residues 138–158 form a helical membrane-spanning segment; that stretch reads VILFMFVLAVAFVLSYAYVWM. Over 159–165 the chain is Cytoplasmic; that stretch reads ARLFPKQ. The helical transmembrane segment at 166 to 186 threads the bilayer; that stretch reads FIWVTGILNVCWAIGTAIFYL. Residues 187–191 lie on the Extracellular side of the membrane; it reads WRKYW. A helical membrane pass occupies residues 192-212; sequence SAGIVFLIFGLFMAFCFWTWI. Over 213-239 the chain is Cytoplasmic; it reads SRIPFSALMLKTTIDVSKKYGHVYLVS. A helical membrane pass occupies residues 240–260; it reads LIGGIIATAFSAWYAITLVGI. Residues 261–280 are Extracellular-facing; that stretch reads YVKYQPAQDNPSCADGGCGK. The helical transmembrane segment at 281–301 threads the bilayer; that stretch reads GKVIGLIAFITFAMYWFSEWL. The Cytoplasmic segment spans residues 302 to 335; it reads KNTIHTTIAGVYGSWYFNPHNFPKDATRASAKRA. The chain crosses the membrane as a helical span at residues 336 to 356; it reads LTYSFGSIALGSLLVAIIQFL. Topologically, residues 357–372 are extracellular; that stretch reads RQICNAARNQEGADGS. Residues 373–393 form a helical membrane-spanning segment; sequence FVGYAIFCCISCLLGLLEWAV. Over 394–434 the chain is Cytoplasmic; that stretch reads EFINRYAFCHIALYGKAYFAAAKDTWKMIKDRGIDALINDC. A helical transmembrane segment spans residues 435 to 455; that stretch reads LIGPVLSFGALFIAYACALLA. At 456–474 the chain is on the extracellular side; sequence YLYLYFTDPAYNSDGQYTA. Residues 475–495 form a helical membrane-spanning segment; it reads VVMAFSFLIGFQIANVFTTPI. Residues 496–538 lie on the Cytoplasmic side of the membrane; it reads SSGIETIFVAAGWDPQVMWRDHPELYNEMVRVYPKVQQVIKDR.

It belongs to the CTL (choline transporter-like) family.

The protein resides in the cell membrane. Probably involved in transport through the plasma membrane. This chain is Protein PNS1 (PNS1), found in Gibberella zeae (strain ATCC MYA-4620 / CBS 123657 / FGSC 9075 / NRRL 31084 / PH-1) (Wheat head blight fungus).